Consider the following 74-residue polypeptide: Cytochrome b (74 aa).

The helical transmembrane segment at 34 to 54 threads the bilayer; sequence FGSLLAICLVTQILTGLLLAM.

Belongs to the cytochrome b family. The cytochrome bc1 complex contains 11 subunits: 3 respiratory subunits (MT-CYB, CYC1 and UQCRFS1), 2 core proteins (UQCRC1 and UQCRC2) and 6 low-molecular weight proteins (UQCRH/QCR6, UQCRB/QCR7, UQCRQ/QCR8, UQCR10/QCR9, UQCR11/QCR10 and a cleavage product of UQCRFS1). This cytochrome bc1 complex then forms a dimer. Heme is required as a cofactor.

It localises to the mitochondrion inner membrane. Its function is as follows. Component of the ubiquinol-cytochrome c reductase complex (complex III or cytochrome b-c1 complex) that is part of the mitochondrial respiratory chain. The b-c1 complex mediates electron transfer from ubiquinol to cytochrome c. Contributes to the generation of a proton gradient across the mitochondrial membrane that is then used for ATP synthesis. This chain is Cytochrome b (MT-CYB), found in Anser caerulescens (Snow goose).